We begin with the raw amino-acid sequence, 200 residues long: Ephrin-A2 (200 aa).

A signal peptide spans 1–22; sequence MPRWEAAALLAAIVGVCVWSDD. An Ephrin RBD domain is found at 28–161; the sequence is SDRYAVYWNR…KLKVYVRPTN (134 aa). Asn-36 carries N-linked (GlcNAc...) asparagine glycosylation. Disulfide bonds link Cys-61–Cys-101 and Cys-89–Cys-150. 2 N-linked (GlcNAc...) asparagine glycosylation sites follow: Asn-161 and Asn-175. A lipid anchor (GPI-anchor amidated asparagine) is attached at Asn-175. The propeptide at 176 to 200 is removed in mature form; it reads NSCCSLAVPRAVLVAAPVFWTLLGS.

It belongs to the ephrin family. Binds to the receptor tyrosine kinases EPHA3, EPHA4 and EPHA5. Interacts with EPHA8; activates EPHA8. As to expression, expressed in a gradient across the tectum being more strongly expressed at the posterior pole.

It localises to the cell membrane. In terms of biological role, cell surface GPI-bound ligand for Eph receptors, a family of receptor tyrosine kinases which are crucial for migration, repulsion and adhesion during neuronal, vascular and epithelial development. Binds promiscuously Eph receptors residing on adjacent cells, leading to contact-dependent bidirectional signaling into neighboring cells. The signaling pathway downstream of the receptor is referred to as forward signaling while the signaling pathway downstream of the ephrin ligand is referred to as reverse signaling. With the EPHA2 receptor may play a role in bone remodeling through regulation of osteoclastogenesis and osteoblastogenesis. This is Ephrin-A2 (EFNA2) from Gallus gallus (Chicken).